The following is a 261-amino-acid chain: 5'-nucleotidase SurE (261 aa).

Residues aspartate 8, aspartate 9, serine 43, and asparagine 96 each coordinate a divalent metal cation.

The protein belongs to the SurE nucleotidase family. It depends on a divalent metal cation as a cofactor.

Its subcellular location is the cytoplasm. It carries out the reaction a ribonucleoside 5'-phosphate + H2O = a ribonucleoside + phosphate. Functionally, nucleotidase that shows phosphatase activity on nucleoside 5'-monophosphates. This is 5'-nucleotidase SurE from Cereibacter sphaeroides (strain ATCC 17023 / DSM 158 / JCM 6121 / CCUG 31486 / LMG 2827 / NBRC 12203 / NCIMB 8253 / ATH 2.4.1.) (Rhodobacter sphaeroides).